The chain runs to 449 residues: Glutamate--tRNA ligase (449 aa).

The 'HIGH' region signature appears at 10–20; it reads PSPTGHLHIGN. The short motif at 214-218 is the 'KMSKS' region element; it reads KLSKR. Residue lysine 217 participates in ATP binding.

It belongs to the class-I aminoacyl-tRNA synthetase family. Glutamate--tRNA ligase type 1 subfamily. In terms of assembly, monomer.

It is found in the cytoplasm. The enzyme catalyses tRNA(Glu) + L-glutamate + ATP = L-glutamyl-tRNA(Glu) + AMP + diphosphate. Functionally, catalyzes the attachment of glutamate to tRNA(Glu) in a two-step reaction: glutamate is first activated by ATP to form Glu-AMP and then transferred to the acceptor end of tRNA(Glu). The polypeptide is Glutamate--tRNA ligase (Acholeplasma laidlawii (strain PG-8A)).